A 153-amino-acid chain; its full sequence is Deoxyuridine 5'-triphosphate nucleotidohydrolase (153 aa).

Substrate contacts are provided by residues 65-67 (RSG), Asn78, and 82-84 (TID). The tract at residues 132–153 (MTQRGEGGFGHTGISAVHPRTH) is disordered.

Belongs to the dUTPase family. It depends on Mg(2+) as a cofactor.

It catalyses the reaction dUTP + H2O = dUMP + diphosphate + H(+). Its pathway is pyrimidine metabolism; dUMP biosynthesis; dUMP from dCTP (dUTP route): step 2/2. In terms of biological role, this enzyme is involved in nucleotide metabolism: it produces dUMP, the immediate precursor of thymidine nucleotides and it decreases the intracellular concentration of dUTP so that uracil cannot be incorporated into DNA. The chain is Deoxyuridine 5'-triphosphate nucleotidohydrolase from Chlorobium limicola (strain DSM 245 / NBRC 103803 / 6330).